A 147-amino-acid polypeptide reads, in one-letter code: Large ribosomal subunit protein uL15 (147 aa).

Residues Met1 to Arg47 form a disordered region. Over residues Thr23 to Gln35 the composition is skewed to gly residues.

The protein belongs to the universal ribosomal protein uL15 family. As to quaternary structure, part of the 50S ribosomal subunit.

Its function is as follows. Binds to the 23S rRNA. The sequence is that of Large ribosomal subunit protein uL15 from Clostridioides difficile (strain 630) (Peptoclostridium difficile).